A 185-amino-acid chain; its full sequence is Ribosome-recycling factor (185 aa).

It belongs to the RRF family.

It localises to the cytoplasm. Its function is as follows. Responsible for the release of ribosomes from messenger RNA at the termination of protein biosynthesis. May increase the efficiency of translation by recycling ribosomes from one round of translation to another. The sequence is that of Ribosome-recycling factor from Wolbachia sp. subsp. Drosophila simulans (strain wRi).